Here is a 385-residue protein sequence, read N- to C-terminus: Ethanolamine kinase 2 (385 aa).

Belongs to the choline/ethanolamine kinase family. Expressed in testis and liver. Low expression in ovary and kidney.

The catalysed reaction is ethanolamine + ATP = phosphoethanolamine + ADP + H(+). It participates in phospholipid metabolism; phosphatidylethanolamine biosynthesis; phosphatidylethanolamine from ethanolamine: step 1/3. Its function is as follows. Highly specific for ethanolamine phosphorylation. Does not have choline kinase activity. The polypeptide is Ethanolamine kinase 2 (Etnk2) (Mus musculus (Mouse)).